A 677-amino-acid chain; its full sequence is Regulator of G-protein signaling 9 (677 aa).

The DEP domain maps to 30–105; it reads PETGVRMQNQ…PDSSLYRFQT (76 aa). The G protein gamma domain maps to 219-280; sequence VTAVRKEIMY…ITDDTQFWDL (62 aa). An RGS domain is found at 295–416; sequence RWAFNFSELI…SPIYKEMLAK (122 aa). Disordered stretches follow at residues 530 to 571 and 639 to 677; these read SSGL…RAPL and DSGPCLMDSDDPGAGESGDQTTEKEVICPWESLAEGKAG.

Heterodimer with GNB5. Interacts with RGS7BP, leading to regulate the subcellular location of the heterodimer formed with GNB5. Component of the RGS9-1-Gbeta5 complex composed of RGS9 (RGS9-1), Gbeta5 (GNB5) and RGS9BP. Interacts with PDE6G and GNAT1. Expressed in the central nervous system. Isoform RGS9L is found in striatum, hypothalamus and nucleus accumbens while isoform RGS9S is expressed in retina and pineal gland.

It is found in the membrane. Inhibits signal transduction by increasing the GTPase activity of G protein alpha subunits thereby driving them into their inactive GDP-bound form. Binds to GNAT1. Involved in phototransduction; key element in the recovery phase of visual transduction. The protein is Regulator of G-protein signaling 9 (Rgs9) of Rattus norvegicus (Rat).